Here is a 134-residue protein sequence, read N- to C-terminus: Small ribosomal subunit protein bS6 (134 aa).

Residues 113–122 (NKDIKEKEQP) are compositionally biased toward basic and acidic residues. The interval 113-134 (NKDIKEKEQPSESNVDADLKVN) is disordered.

It belongs to the bacterial ribosomal protein bS6 family.

In terms of biological role, binds together with bS18 to 16S ribosomal RNA. The protein is Small ribosomal subunit protein bS6 of Borrelia recurrentis (strain A1).